The chain runs to 423 residues: Gamma-glutamyl phosphate reductase (423 aa).

It belongs to the gamma-glutamyl phosphate reductase family.

It is found in the cytoplasm. The catalysed reaction is L-glutamate 5-semialdehyde + phosphate + NADP(+) = L-glutamyl 5-phosphate + NADPH + H(+). It functions in the pathway amino-acid biosynthesis; L-proline biosynthesis; L-glutamate 5-semialdehyde from L-glutamate: step 2/2. Its function is as follows. Catalyzes the NADPH-dependent reduction of L-glutamate 5-phosphate into L-glutamate 5-semialdehyde and phosphate. The product spontaneously undergoes cyclization to form 1-pyrroline-5-carboxylate. The polypeptide is Gamma-glutamyl phosphate reductase (Pseudomonas putida (strain ATCC 47054 / DSM 6125 / CFBP 8728 / NCIMB 11950 / KT2440)).